A 231-amino-acid polypeptide reads, in one-letter code: Regulatory factor X-associated protein (231 aa).

The tract at residues 1-163 (MEAQAVPEGS…GNVKLEESTD (163 aa)) is disordered. Over residues 50 to 65 (ADAEDEAGDDDADLLD) the composition is skewed to acidic residues. The span at 115–138 (KQRKPWMCKKHRNKMYKDKYKKKK) shows a compositional bias: basic residues. The Nuclear localization signal motif lies at 123-138 (KKHRNKMYKDKYKKKK). K157 participates in a covalent cross-link: Glycyl lysine isopeptide (Lys-Gly) (interchain with G-Cter in SUMO2).

In terms of assembly, RFX consists of at least 3 different subunits; RFXAP, RFX5 and RFX-B/RFXANK; with each subunit representing a separate complementation group. RFX forms cooperative DNA binding complexes with X2BP and CBF/NF-Y. RFX associates with CIITA to form an active transcriptional complex. In terms of processing, phosphorylated.

It is found in the nucleus. Part of the RFX complex that binds to the X-box of MHC II promoters. The protein is Regulatory factor X-associated protein (Rfxap) of Mus musculus (Mouse).